The following is a 332-amino-acid chain: Holliday junction branch migration complex subunit RuvB (332 aa).

The large ATPase domain (RuvB-L) stretch occupies residues 1 to 182 (MNKNFIESNL…FAFTCRLEYY (182 aa)). ATP is bound by residues Leu-21, Arg-22, Gly-63, Lys-66, Thr-67, Thr-68, 129–131 (EDF), Arg-172, Tyr-182, and Arg-219. Thr-67 contacts Mg(2+). The interval 183 to 253 (DPMILQKILL…VANRALTMLS (71 aa)) is small ATPAse domain (RuvB-S). The interval 256–332 (EKGLDEMDKK…YQHIVGSSQR (77 aa)) is head domain (RuvB-H). DNA-binding residues include Arg-311 and Arg-316.

It belongs to the RuvB family. In terms of assembly, homohexamer. Forms an RuvA(8)-RuvB(12)-Holliday junction (HJ) complex. HJ DNA is sandwiched between 2 RuvA tetramers; dsDNA enters through RuvA and exits via RuvB. An RuvB hexamer assembles on each DNA strand where it exits the tetramer. Each RuvB hexamer is contacted by two RuvA subunits (via domain III) on 2 adjacent RuvB subunits; this complex drives branch migration. In the full resolvosome a probable DNA-RuvA(4)-RuvB(12)-RuvC(2) complex forms which resolves the HJ.

Its subcellular location is the cytoplasm. The catalysed reaction is ATP + H2O = ADP + phosphate + H(+). Functionally, the RuvA-RuvB-RuvC complex processes Holliday junction (HJ) DNA during genetic recombination and DNA repair, while the RuvA-RuvB complex plays an important role in the rescue of blocked DNA replication forks via replication fork reversal (RFR). RuvA specifically binds to HJ cruciform DNA, conferring on it an open structure. The RuvB hexamer acts as an ATP-dependent pump, pulling dsDNA into and through the RuvAB complex. RuvB forms 2 homohexamers on either side of HJ DNA bound by 1 or 2 RuvA tetramers; 4 subunits per hexamer contact DNA at a time. Coordinated motions by a converter formed by DNA-disengaged RuvB subunits stimulates ATP hydrolysis and nucleotide exchange. Immobilization of the converter enables RuvB to convert the ATP-contained energy into a lever motion, pulling 2 nucleotides of DNA out of the RuvA tetramer per ATP hydrolyzed, thus driving DNA branch migration. The RuvB motors rotate together with the DNA substrate, which together with the progressing nucleotide cycle form the mechanistic basis for DNA recombination by continuous HJ branch migration. Branch migration allows RuvC to scan DNA until it finds its consensus sequence, where it cleaves and resolves cruciform DNA. The polypeptide is Holliday junction branch migration complex subunit RuvB (Protochlamydia amoebophila (strain UWE25)).